The following is a 31-amino-acid chain: Cliotide T10 (31 aa).

Residues 1–31 (GIPCGESCVYIPCTVTALLGCSCKDKVCYKN) constitute a cross-link (cyclopeptide (Gly-Asn)). 3 cysteine pairs are disulfide-bonded: C4/C21, C8/C23, and C13/C28.

In terms of processing, contains 3 disulfide bonds. This is a cyclic peptide. Expressed in seed, root and nodule but not in flower, stem, shoot, leaf and pod (at protein level).

In terms of biological role, probably participates in a plant defense mechanism. This is Cliotide T10 from Clitoria ternatea (Butterfly pea).